A 208-amino-acid chain; its full sequence is Protein GrpE (208 aa).

Residues 1–25 (MVDNKDFNEELKENIQEELDNETKA) show a composition bias toward basic and acidic residues. Positions 1–38 (MVDNKDFNEELKENIQEELDNETKAENPNIDEEVEEVS) are disordered. Residues 29 to 38 (NIDEEVEEVS) show a composition bias toward acidic residues.

It belongs to the GrpE family. As to quaternary structure, homodimer.

It localises to the cytoplasm. Functionally, participates actively in the response to hyperosmotic and heat shock by preventing the aggregation of stress-denatured proteins, in association with DnaK and GrpE. It is the nucleotide exchange factor for DnaK and may function as a thermosensor. Unfolded proteins bind initially to DnaJ; upon interaction with the DnaJ-bound protein, DnaK hydrolyzes its bound ATP, resulting in the formation of a stable complex. GrpE releases ADP from DnaK; ATP binding to DnaK triggers the release of the substrate protein, thus completing the reaction cycle. Several rounds of ATP-dependent interactions between DnaJ, DnaK and GrpE are required for fully efficient folding. This chain is Protein GrpE, found in Clostridium perfringens (strain ATCC 13124 / DSM 756 / JCM 1290 / NCIMB 6125 / NCTC 8237 / Type A).